Reading from the N-terminus, the 273-residue chain is Photosystem I chlorophyll a/b-binding protein 3-1, chloroplastic (273 aa).

A chloroplast-targeting transit peptide spans 1–39; that stretch reads MAAQALVSSSLTSSVQTARQIFGSKPVASASQKKSSFVV. A chlorophyll b-binding site is contributed by tryptophan 56. Phenylalanine 76, serine 82, and glutamate 100 together coordinate chlorophyll a. Arginine 105 lines the chlorophyll b pocket. A helical membrane pass occupies residues 106 to 126; sequence FAMLGAAGAIAPEILGKAGLI. Residue isoleucine 140 coordinates chlorophyll b. The chain crosses the membrane as a helical span at residues 146–166; the sequence is YTYWADNYTLFVLEMALMGFA. Residues glutamate 167 and arginine 170 each contribute to the chlorophyll b site. The residue at position 195 (serine 195) is a Phosphoserine. Chlorophyll a is bound by residues lysine 224, glutamate 225, asparagine 228, arginine 230, glutamine 242, and histidine 257. The helical transmembrane segment at 231–251 threads the bilayer; sequence LAMLAILGYFIQGLVTGVGPY. Phenylalanine 272 contributes to the chlorophyll b binding site.

Belongs to the light-harvesting chlorophyll a/b-binding (LHC) protein family. As to quaternary structure, the LHC complex consists of chlorophyll a-b binding proteins. Red-emitting heterodimer with LHCA2. Interacts with LHCA5. Binds to carotenoids. Binds at least 14 chlorophylls (8 Chl-a and 6 Chl-b) and carotenoids such as lutein and neoxanthin. serves as cofactor. Photoregulated by reversible phosphorylation of its threonine residues.

It localises to the plastid. Its subcellular location is the chloroplast thylakoid membrane. Its function is as follows. The light-harvesting complex (LHC) functions as a light receptor, it captures and delivers excitation energy to photosystems with which it is closely associated, here photosystem I. The chain is Photosystem I chlorophyll a/b-binding protein 3-1, chloroplastic from Arabidopsis thaliana (Mouse-ear cress).